Reading from the N-terminus, the 177-residue chain is Nucleoside triphosphate/diphosphate phosphatase (177 aa).

Residue arginine 23 is the Proton donor of the active site. Mg(2+) is bound by residues asparagine 87, aspartate 103, aspartate 105, aspartate 107, aspartate 120, and glutamate 123.

Belongs to the Ntdp family. Mg(2+) serves as cofactor.

The enzyme catalyses a ribonucleoside 5'-triphosphate + H2O = a ribonucleoside 5'-diphosphate + phosphate + H(+). It catalyses the reaction a ribonucleoside 5'-diphosphate + H2O = a ribonucleoside 5'-phosphate + phosphate + H(+). In terms of biological role, has nucleoside phosphatase activity towards nucleoside triphosphates and nucleoside diphosphates. This chain is Nucleoside triphosphate/diphosphate phosphatase, found in Streptococcus pyogenes serotype M3 (strain ATCC BAA-595 / MGAS315).